The sequence spans 453 residues: Aspartic proteinase PCS1 (453 aa).

The first 18 residues, 1-18, serve as a signal peptide directing secretion; it reads MFSRFHALFLLLVLSVRT. Positions 19–57 are cleaved as a propeptide — activation peptide; that stretch reads YKCVSSSSSSSSSFSFSSFSSSSSSQTLVLPLKTRITPT. Asparagine 70 and asparagine 85 each carry an N-linked (GlcNAc...) asparagine glycan. The 366-residue stretch at 73-438 folds into the Peptidase A1 domain; that stretch reads LTVTLTVGTP…DLQRSRIGLA (366 aa). Aspartate 91 is a catalytic residue. N-linked (GlcNAc...) asparagine glycans are attached at residues asparagine 102, asparagine 175, asparagine 178, and asparagine 243. The active site involves aspartate 304. Asparagine 326 and asparagine 395 each carry an N-linked (GlcNAc...) asparagine glycan.

It belongs to the peptidase A1 family. As to expression, expressed specifically in developing gametophytes and developing seeds.

It localises to the endoplasmic reticulum. Functionally, embryo-specific aspartic protease that limits programmed cell death during reproductive development. Possesses peptidase activity toward casein in vitro. The chain is Aspartic proteinase PCS1 (PCS1) from Arabidopsis thaliana (Mouse-ear cress).